We begin with the raw amino-acid sequence, 239 residues long: Ribonuclease HII (239 aa).

Residues Lys18–Glu231 form the RNase H type-2 domain. Asp24, Glu25, and Asp125 together coordinate a divalent metal cation.

This sequence belongs to the RNase HII family. It depends on Mn(2+) as a cofactor. Mg(2+) is required as a cofactor.

The protein resides in the cytoplasm. The enzyme catalyses Endonucleolytic cleavage to 5'-phosphomonoester.. Its function is as follows. Endonuclease that specifically degrades the RNA of RNA-DNA hybrids. The protein is Ribonuclease HII of Methanococcus maripaludis (strain C6 / ATCC BAA-1332).